A 2531-amino-acid chain; its full sequence is MPRLLTPLLCLTLLPALAARGLRCSQPSGTCLNGGRCEVANGTEACVCSGAFVGQRCQDSNPCLSTPCKNAGTCHVVDHGGTVDYACSCPLGFSGPLCLTPLDNACLANPCRNGGTCDLLTLTEYKCRCPPGWSGKSCQQADPCASNPCANGGQCLPFESSYICRCPPGFHGPTCRQDVNECSQNPGLCRHGGTCHNEIGSYRCACRATHTGPHCELPYVPCSPSPCQNGGTCRPTGDTTHECACLPGFAGQNCEENVDDCPGNNCKNGGACVDGVNTYNCRCPPEWTGQYCTEDVDECQLMPNACQNGGTCHNTHGGYNCVCVNGWTGEDCSENIDDCASAACFQGATCHDRVASFYCECPHGRTGLLCHLNDACISNPCNEGSNCDTNPVNGKAICTCPSGYTGPACSQDVDECALGANPCEHAGKCLNTLGSFECQCLQGYTGPRCEIDVNECISNPCQNDATCLDQIGEFQCICMPGYEGVYCEINTDECASSPCLHNGHCMDKINEFQCQCPKGFNGHLCQYDVDECASTPCKNGAKCLDGPNTYTCVCTEGYTGTHCEVDIDECDPDPCHYGSCKDGVATFTCLCQPGYTGHHCETNINECHSQPCRHGGTCQDRDNSYLCLCLKGTTGPNCEINLDDCASNPCDSGTCLDKIDGYECACEPGYTGSMCNVNIDECAGSPCHNGGTCEDGIAGFTCRCPEGYHDPTCLSEVNECNSNPCIHGACRDGLNGYKCDCAPGWSGTNCDINNNECESNPCVNGGTCKDMTSGYVCTCREGFSGPNCQTNINECASNPCLNQGTCIDDVAGYKCNCPLPYTGATCEVVLAPCATSPCKNSGVCKESEDYESFSCVCPTGWQGQTCEVDINECVKSPCRHGASCQNTNGSYRCLCQAGYTGRNCESDIDDCRPNPCHNGGSCTDGINTAFCDCLPGFQGAFCEEDINECASNPCQNGANCTDCVDSYTCTCPVGFNGIHCENNTPDCTESSCFNGGTCVDGINSFTCLCPPGFTGSYCQYDVNECDSRPCLHGGTCQDSYGTYKCTCPQGYTGLNCQNLVRWCDSAPCKNGGRCWQTNTQYHCECRSGWTGVNCDVLSVSCEVAAQKRGIDVTLLCQHGGLCVDEGDKHYCHCQAGYTGSYCEDEVDECSPNPCQNGATCTDYLGGFSCKCVAGYHGSNCSEEINECLSQPCQNGGTCIDLTNSYKCSCPRGTQGVHCEINVDDCHPPLDPASRSPKCFNNGTCVDQVGGYTCTCPPGFVGERCEGDVNECLSNPCDPRGTQNCVQRVNDFHCECRAGHTGRRCESVINGCRGKPCKNGGVCAVASNTARGFICRCPAGFEGATCENDARTCGSLRCLNGGTCISGPRSPTCLCLGSFTGPECQFPASSPCVGSNPCYNQGTCEPTSENPFYRCLCPAKFNGLLCHILDYSFTGGAGRDIPPPQIEEACELPECQVDAGNKVCNLQCNNHACGWDGGDCSLNFNDPWKNCTQSLQCWKYFSDGHCDSQCNSAGCLFDGFDCQLTEGQCNPLYDQYCKDHFSDGHCDQGCNSAECEWDGLDCAEHVPERLAAGTLVLVVLLPPDQLRNNSFHFLRELSHVLHTNVVFKRDAQGQQMIFPYYGHEEELRKHPIKRSTVGWATSSLLPGTSGGRQRRELDPMDIRGSIVYLEIDNRQCVQSSSQCFQSATDVAAFLGALASLGSLNIPYKIEAVKSEPVEPPLPSQLHLMYVAAAAFVLLFFVGCGVLLSRKRRRQHGQLWFPEGFKVSEASKKKRREPLGEDSVGLKPLKNASDGALMDDNQNEWGDEDLETKKFRFEEPVVLPDLSDQTDHRQWTQQHLDAADLRMSAMAPTPPQGEVDADCMDVNVRGPDGFTPLMIASCSGGGLETGNSEEEEDAPAVISDFIYQGASLHNQTDRTGETALHLAARYSRSDAAKRLLEASADANIQDNMGRTPLHAAVSADAQGVFQILLRNRATDLDARMHDGTTPLILAARLAVEGMLEDLINSHADVNAVDDLGKSALHWAAAVNNVDAAVVLLKNGANKDMQNNKEETPLFLAAREGSYETAKVLLDHFANRDITDHMDRLPRDIAQERMHHDIVRLLDEYNLVRSPQLHGTALGGTPTLSPTLCSPNGYLGNLKSATQGKKARKPSTKGLACGSKEAKDLKARRKKSQDGKGCLLDSSSMLSPVDSLESPHGYLSDVASPPLLPSPFQQSPSMPLSHLPGMPDTHLGISHLNVAAKPEMAALAGGSRLAFEPPPPRLSHLPVASSASTVLSTNGTGAMNFTVGAPASLNGQCEWLPRLQNGMVPSQYNPLRPGVTPGTLSTQAAGLQHSMMGPLHSSLSTNTLSPIIYQGLPNTRLATQPHLVQTQQVQPQNLQLQPQNLQPPSQPHLSVSSAANGHLGRSFLSGEPSQADVQPLGPSSLPVHTILPQESQALPTSLPSSMVPPMTTTQFLTPPSQHSYSSSPVDNTPSHQLQVPEHPFLTPSPESPDQWSSSSPHSNISDWSEGISSPPTTMPSQITHIPEAFK.

A signal peptide spans 1–18 (MPRLLTPLLCLTLLPALA). Residues 19–1725 (ARGLRCSQPS…VEPPLPSQLH (1707 aa)) are Extracellular-facing. EGF-like domains lie at 20–58 (RGLR…QRCQ), 59–99 (DSNP…PLCL), 102–139 (LDNA…KSCQ), and 140–176 (QADP…PTCR). Disulfide bonds link C24/C37, C31/C46, C63/C74, C68/C87, C89/C98, C106/C117, C111/C127, C129/C138, C144/C155, C149/C164, C166/C175, C182/C195, C189/C204, C206/C215, C222/C233, C227/C243, C245/C254, C261/C272, C266/C281, C283/C292, C299/C312, C306/C321, C323/C332, C339/C350, C344/C359, C361/C370, C376/C387, C381/C398, C400/C409, C416/C429, C423/C438, and C440/C449. S65 carries an O-linked (Glc...) serine glycan. The O-linked (Fuc...) threonine glycan is linked to T73. O-linked (Fuc...) threonine glycosylation occurs at T116. O-linked (Glc...) serine glycosylation is present at S146. Residues 178–216 (DVNECSQNPGLCRHGGTCHNEIGSYRCACRATHTGPHCE) form the EGF-like 5; calcium-binding domain. T194 carries O-linked (Fuc...) threonine glycosylation. Positions 218 to 255 (PYVPCSPSPCQNGGTCRPTGDTTHECACLPGFAGQNCE) constitute an EGF-like 6 domain. O-linked (Fuc...) threonine; alternate glycosylation is present at T232. A glycan (O-linked (GalNAc...) threonine; alternate) is linked at T232. Residues 257 to 293 (NVDDCPGNNCKNGGACVDGVNTYNCRCPPEWTGQYCT) enclose the EGF-like 7; calcium-binding domain. The EGF-like 8; calcium-binding domain maps to 295–333 (DVDECQLMPNACQNGGTCHNTHGGYNCVCVNGWTGEDCS). O-linked (Fuc...) threonine glycosylation occurs at T311. One can recognise an EGF-like 9; calcium-binding domain in the interval 335 to 371 (NIDDCASAACFQGATCHDRVASFYCECPHGRTGLLCH). Residue S341 is glycosylated (O-linked (Glc...) serine). T349 is a glycosylation site (O-linked (Fuc...) threonine). The 39-residue stretch at 372 to 410 (LNDACISNPCNEGSNCDTNPVNGKAICTCPSGYTGPACS) folds into the EGF-like 10; calcium-binding domain. S378 carries O-linked (Glc...) serine glycosylation. In terms of domain architecture, EGF-like 11; calcium-binding spans 412–450 (DVDECALGANPCEHAGKCLNTLGSFECQCLQGYTGPRCE). The tract at residues 420–421 (AN) is interaction with DLL4. The Ca(2+) site is built by T432 and S435. An O-linked (Glc...) serine glycan is attached at S435. The interaction with DLL4 stretch occupies residues 448-452 (RCEID). Positions 452, 453, and 455 each coordinate Ca(2+). The region spanning 452-488 (DVNECISNPCQNDATCLDQIGEFQCICMPGYEGVYCE) is the EGF-like 12; calcium-binding domain. Intrachain disulfides connect C456–C467, C461–C476, and C478–C487. Residue S458 is glycosylated (O-linked (Glc...) serine). O-linked (Fuc...) threonine glycosylation is present at T466. 2 residues coordinate Ca(2+): D469 and Q470. 3 residues coordinate Ca(2+): N490, T491, and E493. The EGF-like 13; calcium-binding domain occupies 490–526 (NTDECASSPCLHNGHCMDKINEFQCQCPKGFNGHLCQ). 75 disulfides stabilise this stretch: C494-C505, C499-C514, C516-C525, C532-C543, C537-C552, C554-C563, C570-C580, C575-C589, C591-C600, C607-C618, C612-C627, C629-C638, C645-C655, C650-C664, C666-C675, C682-C693, C687-C702, C704-C713, C720-C730, C725-C739, C741-C750, C757-C768, C762-C777, C779-C788, C795-C806, C800-C815, C817-C826, C833-C844, C838-C855, C857-C866, C873-C884, C878-C893, C895-C904, C911-C922, C916-C931, C933-C942, C949-C960, C954-C969, C971-C980, C987-C998, C992-C1007, C1009-C1018, C1025-C1036, C1030-C1045, C1047-C1056, C1063-C1074, C1068-C1083, C1085-C1094, C1101-C1122, C1116-C1131, C1133-C1142, C1149-C1160, C1154-C1169, C1171-C1180, C1187-C1198, C1192-C1207, C1209-C1218, C1225-C1244, C1238-C1253, C1255-C1264, C1271-C1284, C1276-C1293, C1295-C1304, C1311-C1322, C1316-C1334, C1336-C1345, C1352-C1363, C1357-C1372, C1374-C1383, C1391-C1403, C1397-C1414, C1416-C1425, C1449-C1472, C1454-C1467, and C1463-C1479. S496 carries an O-linked (Glc...) serine glycan. The Ca(2+) site is built by D507 and K508. The EGF-like 14; calcium-binding domain occupies 528 to 564 (DVDECASTPCKNGAKCLDGPNTYTCVCTEGYTGTHCE). S534 carries an O-linked (Glc...) serine glycan. In terms of domain architecture, EGF-like 15; calcium-binding spans 566 to 601 (DIDECDPDPCHYGSCKDGVATFTCLCQPGYTGHHCE). The 37-residue stretch at 603 to 639 (NINECHSQPCRHGGTCQDRDNSYLCLCLKGTTGPNCE) folds into the EGF-like 16; calcium-binding domain. Residue S609 is glycosylated (O-linked (Glc...) serine). Residue T617 is glycosylated (O-linked (Fuc...) threonine). One can recognise an EGF-like 17; calcium-binding domain in the interval 641–676 (NLDDCASNPCDSGTCLDKIDGYECACEPGYTGSMCN). S647 carries O-linked (Glc...) serine glycosylation. The region spanning 678–714 (NIDECAGSPCHNGGTCEDGIAGFTCRCPEGYHDPTCL) is the EGF-like 18; calcium-binding domain. T692 carries an O-linked (Fuc...) threonine glycan. An EGF-like 19; calcium-binding domain is found at 716–751 (EVNECNSNPCIHGACRDGLNGYKCDCAPGWSGTNCD). O-linked (Glc...) serine glycosylation is present at S722. The 37-residue stretch at 753 to 789 (NNNECESNPCVNGGTCKDMTSGYVCTCREGFSGPNCQ) folds into the EGF-like 20; calcium-binding domain. An O-linked (Glc...) serine glycan is attached at S759. O-linked (Fuc...) threonine glycosylation is present at T767. S784 carries an O-linked (GlcNAc) serine glycan. Residues 791-827 (NINECASNPCLNQGTCIDDVAGYKCNCPLPYTGATCE) form the EGF-like 21; calcium-binding domain. O-linked (Glc...) serine glycosylation occurs at S797. Residue T805 is glycosylated (O-linked (Fuc...) threonine). In terms of domain architecture, EGF-like 22 spans 829 to 867 (VLAPCATSPCKNSGVCKESEDYESFSCVCPTGWQGQTCE). The EGF-like 23; calcium-binding domain occupies 869–905 (DINECVKSPCRHGASCQNTNGSYRCLCQAGYTGRNCE). Residue N888 is glycosylated (N-linked (GlcNAc...) asparagine). T900 carries O-linked (GlcNAc) threonine glycosylation. The region spanning 907–943 (DIDDCRPNPCHNGGSCTDGINTAFCDCLPGFQGAFCE) is the EGF-like 24 domain. O-linked (Fuc) serine glycosylation occurs at S921. An EGF-like 25; calcium-binding domain is found at 945 to 981 (DINECASNPCQNGANCTDCVDSYTCTCPVGFNGIHCE). S951 is a glycosylation site (O-linked (Glc...) serine). An N-linked (GlcNAc...) asparagine glycan is attached at N959. The region spanning 983–1019 (NTPDCTESSCFNGGTCVDGINSFTCLCPPGFTGSYCQ) is the EGF-like 26 domain. A glycan (O-linked (Fuc...) threonine) is linked at T997. The EGF-like 27; calcium-binding domain occupies 1021–1057 (DVNECDSRPCLHGGTCQDSYGTYKCTCPQGYTGLNCQ). O-linked (Glc...) serine glycosylation occurs at S1027. O-linked (Fuc...) threonine glycosylation is present at T1035. 2 EGF-like domains span residues 1059-1095 (LVRW…VNCD) and 1097-1143 (LSVS…SYCE). An O-linked (Glc...) serine glycan is attached at S1065. Positions 1145–1181 (EVDECSPNPCQNGATCTDYLGGFSCKCVAGYHGSNCS) constitute an EGF-like 30; calcium-binding domain. T1159 is a glycosylation site (O-linked (Fuc...) threonine). N1179 carries an N-linked (GlcNAc...) asparagine glycan. Residues 1183 to 1219 (EINECLSQPCQNGGTCIDLTNSYKCSCPRGTQGVHCE) enclose the EGF-like 31; calcium-binding domain. A glycan (O-linked (Glc...) serine) is linked at S1189. O-linked (Fuc...) threonine glycosylation is present at T1197. Positions 1221-1265 (NVDDCHPPLDPASRSPKCFNNGTCVDQVGGYTCTCPPGFVGERCE) constitute an EGF-like 32; calcium-binding domain. N1241 carries N-linked (GlcNAc...) asparagine glycosylation. 4 EGF-like domains span residues 1267–1305 (DVNE…RRCE), 1307–1346 (VING…ATCE), 1348–1384 (DART…PECQ), and 1387–1426 (ASSP…LLCH). The O-linked (Glc...) serine glycan is linked to S1273. T1362 carries an O-linked (Fuc...) threonine glycan. Residue T1379 is glycosylated (O-linked (GlcNAc...) threonine). A glycan (O-linked (Fuc...) threonine; alternate) is linked at T1402. T1402 carries an O-linked (GalNAc...) threonine; alternate glycan. 3 LNR repeats span residues 1449 to 1489 (CELP…PWKN), 1490 to 1531 (CTQS…CNPL), and 1532 to 1571 (YDQY…RLAA). Ca(2+) is bound by residues D1457, N1460, D1475, and D1478. Residue N1489 is glycosylated (N-linked (GlcNAc...) asparagine). Disulfide bonds link C1490–C1514, C1496–C1509, C1505–C1521, C1536–C1549, and C1545–C1561. N1587 carries an N-linked (GlcNAc...) asparagine glycan. Residues 1718-1750 (PPLPSQLHLMYVAAAAFVLLFFVGCGVLLSRKR) are interaction with PSEN1. The chain crosses the membrane as a helical span at residues 1726–1746 (LMYVAAAAFVLLFFVGCGVLL). Over 1747–2531 (SRKRRRQHGQ…QITHIPEAFK (785 aa)) the chain is Cytoplasmic. Residue K1749 forms a Glycyl lysine isopeptide (Lys-Gly) (interchain with G-Cter in ubiquitin) linkage. The interval 1770-1798 (KKKRREPLGEDSVGLKPLKNASDGALMDD) is disordered. Position 1851 is a phosphothreonine (T1851). ANK repeat units follow at residues 1917–1946 (TGET…DANI), 1950–1980 (MGRT…DLDA), 1984–2013 (DGTT…DVNA), 2017–2046 (LGKS…NKDM), and 2050–2079 (KEET…NRDI). The interval 1937–1945 (LLEASADAN) is HIF1AN-binding. Residue N1945 is modified to (3S)-3-hydroxyasparagine; by HIF1AN; partial. The interval 2004–2012 (LINSHADVN) is HIF1AN-binding. N2012 carries the (3S)-3-hydroxyasparagine; by HIF1AN; partial modification. 3 disordered regions span residues 2140 to 2185 (KSAT…DSSS), 2382 to 2428 (QPQN…SLPV), and 2440 to 2531 (PTSL…EAFK). A compositionally biased stretch (low complexity) spans 2382–2395 (QPQNLQPPSQPHLS). Polar residues predominate over residues 2440–2478 (PTSLPSSMVPPMTTTQFLTPPSQHSYSSSPVDNTPSHQL). Residues 2488-2503 (PSPESPDQWSSSSPHS) are compositionally biased toward low complexity. Residues 2504 to 2524 (NISDWSEGISSPPTTMPSQIT) are compositionally biased toward polar residues.

The protein belongs to the NOTCH family. Heterodimer of a C-terminal fragment N(TM) and an N-terminal fragment N(EC) which are probably linked by disulfide bonds. Interacts with DNER, DTX1, DTX2 and RBPJ/RBPSUH. Also interacts with MAML1, MAML2 and MAML3 which act as transcriptional coactivators for NOTCH1. Notch 1 intracellular domain interacts with SNW1; the interaction involves multimerized NOTCH1 NICD and is implicated in a formation of an intermediate preactivation complex which associates with DNA-bound CBF-1/RBPJ. The activated membrane-bound form interacts with AAK1 which promotes NOTCH1 stabilization. Forms a trimeric complex with FBXW7 and SGK1. Interacts with HIF1AN. HIF1AN negatively regulates the function of notch intracellular domain (NICD), accelerating myogenic differentiation. Interacts (via NICD) with SNAI1 (via zinc fingers); the interaction induces SNAI1 degradation via MDM2-mediated ubiquitination and inhibits SNAI1-induced cell invasion. Interacts (via NICD) with MDM2A. Interacts (via NICD) with BCL6; the interaction decreases MAML1 recruitment by NOTCH1 NICD on target genes DNA and inhibits NOTCH1 transactivation activity. Interacts with THBS4. Interacts (via the EGF-like repeat region) with CCN3 (via CTCK domain). Interacts (via EGF-like domains) with DLL4 (via N-terminal DSL and MNNL domains). Interacts with ZMIZ1. Interacts (via NICD domain) with MEGF10 (via the cytoplasmic domain). Interacts with DLL1 and JAG1. Interacts (via NICD domain) with PRAG1. Forms a complex with PRAG1, N1ICD and MAML1, in a MAML1-dependent manner. Interacts (via transmembrane region) with PSEN1; the interaction is direct. Interacts with ZFP64. In terms of processing, synthesized in the endoplasmic reticulum as an inactive form which is proteolytically cleaved by a furin-like convertase in the trans-Golgi network before it reaches the plasma membrane to yield an active, ligand-accessible form. Cleavage results in a C-terminal fragment N(TM) and a N-terminal fragment N(EC). Following ligand binding, it is cleaved by ADAM17 to yield a membrane-associated intermediate fragment called notch extracellular truncation (NEXT). Following endocytosis, this fragment is then cleaved by one of the catalytic subunits of gamma-secretase (PSEN1 or PSEN2) to release a Notch-derived peptide containing the intracellular domain (NICD) from the membrane. Phosphorylated. Post-translationally, O-linked glycosylation by GALNT11 is involved in determination of left/right symmetry: glycosylation promotes activation of NOTCH1, possibly by promoting cleavage by ADAM17, modulating the balance between motile and immotile (sensory) cilia at the left-right organiser (LRO). O-glycosylated on the EGF-like domains. O-glucosylated at Ser-435 by KDELC1 and KDELC2. Contains both O-linked fucose and O-linked glucose in the EGF-like domains 11, 12 and 13, which are interacting with the residues on DLL4. O-glycosylation at Ser-1027 is only partial. MFNG-, RFNG- and LFNG-mediated modification of O-fucose residues at specific EGF-like domains results in inhibition of its activation by JAG1 and enhancement of its activation by DLL1 via an increased binding to DLL1. In terms of processing, ubiquitinated. Undergoes 'Lys-29'-linked polyubiquitination by ITCH; promotes the lysosomal degradation of non-activated internalized NOTCH1. Deubiquitination by USP12 is required for transport of internalized non-activated receptor from late endosomes to lysosomes for degradation. Monoubiquitination at Lys-1749 is required for activation by gamma-secretase cleavage, it promotes interaction with AAK1, which stabilizes it. Deubiquitination by EIF3F is necessary for nuclear import of activated Notch. Hydroxylated at Asn-1945 and Asn-2012 by HIF1AN. Hydroxylation reduces affinity for HI1AN and may thus indirectly modulate negative regulation of NICD. In terms of tissue distribution, highly expressed in the brain, lung and thymus. Expressed at lower levels in the spleen, bone-marrow, spinal cord, eyes, mammary gland, liver, intestine, skeletal muscle, kidney and heart. In the hair follicle, highly expressed exclusively in the epithelial compartment.

The protein resides in the cell membrane. It is found in the late endosome membrane. Its subcellular location is the nucleus. In terms of biological role, functions as a receptor for membrane-bound ligands Jagged-1 (JAG1), Jagged-2 (JAG2) and Delta-1 (DLL1) to regulate cell-fate determination. Upon ligand activation through the released notch intracellular domain (NICD) it forms a transcriptional activator complex with RBPJ/RBPSUH and activates genes of the enhancer of split locus. Affects the implementation of differentiation, proliferation and apoptotic programs. Involved in angiogenesis; negatively regulates endothelial cell proliferation and migration and angiogenic sprouting. Involved in the maturation of both CD4(+) and CD8(+) cells in the thymus. Important for follicular differentiation and possibly cell fate selection within the follicle. During cerebellar development, functions as a receptor for neuronal DNER and is involved in the differentiation of Bergmann glia. Represses neuronal and myogenic differentiation. May play an essential role in postimplantation development, probably in some aspect of cell specification and/or differentiation. May be involved in mesoderm development, somite formation and neurogenesis. May enhance HIF1A function by sequestering HIF1AN away from HIF1A. Required for the THBS4 function in regulating protective astrogenesis from the subventricular zone (SVZ) niche after injury. Involved in determination of left/right symmetry by modulating the balance between motile and immotile (sensory) cilia at the left-right organiser (LRO). The protein is Neurogenic locus notch homolog protein 1 (Notch1) of Mus musculus (Mouse).